Reading from the N-terminus, the 441-residue chain is ATP-dependent protease ATPase subunit HslU (441 aa).

ATP is bound by residues Ile-18, 60–65, Asp-254, Glu-319, and Arg-391; that span reads GVGKTE.

It belongs to the ClpX chaperone family. HslU subfamily. In terms of assembly, a double ring-shaped homohexamer of HslV is capped on each side by a ring-shaped HslU homohexamer. The assembly of the HslU/HslV complex is dependent on binding of ATP.

It localises to the cytoplasm. In terms of biological role, ATPase subunit of a proteasome-like degradation complex; this subunit has chaperone activity. The binding of ATP and its subsequent hydrolysis by HslU are essential for unfolding of protein substrates subsequently hydrolyzed by HslV. HslU recognizes the N-terminal part of its protein substrates and unfolds these before they are guided to HslV for hydrolysis. This chain is ATP-dependent protease ATPase subunit HslU, found in Shewanella halifaxensis (strain HAW-EB4).